A 468-amino-acid chain; its full sequence is ATP synthase subunit beta (468 aa).

ATP is bound at residue 155–162 (GGAGVGKT).

This sequence belongs to the ATPase alpha/beta chains family. F-type ATPases have 2 components, CF(1) - the catalytic core - and CF(0) - the membrane proton channel. CF(1) has five subunits: alpha(3), beta(3), gamma(1), delta(1), epsilon(1). CF(0) has three main subunits: a(1), b(2) and c(9-12). The alpha and beta chains form an alternating ring which encloses part of the gamma chain. CF(1) is attached to CF(0) by a central stalk formed by the gamma and epsilon chains, while a peripheral stalk is formed by the delta and b chains.

It is found in the cell membrane. The enzyme catalyses ATP + H2O + 4 H(+)(in) = ADP + phosphate + 5 H(+)(out). Produces ATP from ADP in the presence of a proton gradient across the membrane. The catalytic sites are hosted primarily by the beta subunits. This Streptococcus pneumoniae (strain Taiwan19F-14) protein is ATP synthase subunit beta.